A 309-amino-acid polypeptide reads, in one-letter code: MITIVGSGRVGATTAAFLMFYELDNEVTLIDVIKGLPQGEALDLNHAAAILGKSVRYKGSNDYKDMEGSDIVIVTAGLARKPGMTREELAGKNAEIISSIADQIKKYAPNSIVIITTNPLDAMVYVLYKRLGFPRNRVIGFSGVLDSNRMAYYASQIIGIAPESIIPVVLGQHGENMYPVPEASFVYGKPLTEFLTQEQYNDIVKKTIQAGADITNLRGFSSNWGPAAGLALMVDSIKKNRRRVFEASVYLDGEYGVKDVFAEVPVVLGKNGVEKIIELNLTPEQRQKFMQSIEAVKKNLTQVPPQYLK.

NAD(+)-binding positions include glycine 6–glycine 11 and aspartate 31. The substrate site is built by arginine 80 and arginine 86. NAD(+)-binding positions include asparagine 93 and threonine 116 to asparagine 118. Substrate is bound by residues asparagine 118 and arginine 149. Histidine 173 functions as the Proton acceptor in the catalytic mechanism.

This sequence belongs to the LDH/MDH superfamily.

The enzyme catalyses (S)-malate + NAD(+) = oxaloacetate + NADH + H(+). Its function is as follows. Catalyzes the reversible oxidation of malate to oxaloacetate. In Caldivirga maquilingensis (strain ATCC 700844 / DSM 13496 / JCM 10307 / IC-167), this protein is Malate dehydrogenase (mdh).